A 253-amino-acid polypeptide reads, in one-letter code: Proteasome subunit alpha (253 aa).

A disordered region spans residues 229-253 (ADESQSYIDDIEDAADDSDDDDDEE). The span at 237–253 (DDIEDAADDSDDDDDEE) shows a compositional bias: acidic residues.

The protein belongs to the peptidase T1A family. In terms of assembly, the 20S proteasome core is composed of 14 alpha and 14 beta subunits that assemble into four stacked heptameric rings, resulting in a barrel-shaped structure. The two inner rings, each composed of seven catalytic beta subunits, are sandwiched by two outer rings, each composed of seven alpha subunits. The catalytic chamber with the active sites is on the inside of the barrel. Has a gated structure, the ends of the cylinder being occluded by the N-termini of the alpha-subunits. Is capped at one or both ends by the proteasome regulatory ATPase, PAN.

The protein resides in the cytoplasm. With respect to regulation, the formation of the proteasomal ATPase PAN-20S proteasome complex, via the docking of the C-termini of PAN into the intersubunit pockets in the alpha-rings, triggers opening of the gate for substrate entry. Interconversion between the open-gate and close-gate conformations leads to a dynamic regulation of the 20S proteasome proteolysis activity. Its function is as follows. Component of the proteasome core, a large protease complex with broad specificity involved in protein degradation. The protein is Proteasome subunit alpha of Halobacterium salinarum (strain ATCC 29341 / DSM 671 / R1).